The following is a 133-amino-acid chain: Small ribosomal subunit protein bS6 (133 aa).

This sequence belongs to the bacterial ribosomal protein bS6 family.

Functionally, binds together with bS18 to 16S ribosomal RNA. The protein is Small ribosomal subunit protein bS6 of Borrelia turicatae (strain 91E135).